Reading from the N-terminus, the 476-residue chain is Aspartyl/glutamyl-tRNA(Asn/Gln) amidotransferase subunit B (476 aa).

Belongs to the GatB/GatE family. GatB subfamily. Heterotrimer of A, B and C subunits.

The catalysed reaction is L-glutamyl-tRNA(Gln) + L-glutamine + ATP + H2O = L-glutaminyl-tRNA(Gln) + L-glutamate + ADP + phosphate + H(+). It carries out the reaction L-aspartyl-tRNA(Asn) + L-glutamine + ATP + H2O = L-asparaginyl-tRNA(Asn) + L-glutamate + ADP + phosphate + 2 H(+). Allows the formation of correctly charged Asn-tRNA(Asn) or Gln-tRNA(Gln) through the transamidation of misacylated Asp-tRNA(Asn) or Glu-tRNA(Gln) in organisms which lack either or both of asparaginyl-tRNA or glutaminyl-tRNA synthetases. The reaction takes place in the presence of glutamine and ATP through an activated phospho-Asp-tRNA(Asn) or phospho-Glu-tRNA(Gln). This chain is Aspartyl/glutamyl-tRNA(Asn/Gln) amidotransferase subunit B, found in Lactobacillus acidophilus (strain ATCC 700396 / NCK56 / N2 / NCFM).